The following is a 353-amino-acid chain: Histidinol-phosphate aminotransferase (353 aa).

K211 carries the N6-(pyridoxal phosphate)lysine modification.

The protein belongs to the class-II pyridoxal-phosphate-dependent aminotransferase family. Histidinol-phosphate aminotransferase subfamily. Homodimer. Requires pyridoxal 5'-phosphate as cofactor.

The enzyme catalyses L-histidinol phosphate + 2-oxoglutarate = 3-(imidazol-4-yl)-2-oxopropyl phosphate + L-glutamate. The protein operates within amino-acid biosynthesis; L-histidine biosynthesis; L-histidine from 5-phospho-alpha-D-ribose 1-diphosphate: step 7/9. The sequence is that of Histidinol-phosphate aminotransferase from Marinomonas sp. (strain MWYL1).